The sequence spans 278 residues: Elongation factor Ts (278 aa).

The involved in Mg(2+) ion dislocation from EF-Tu stretch occupies residues 80 to 83 (TDFV).

Belongs to the EF-Ts family.

The protein resides in the cytoplasm. In terms of biological role, associates with the EF-Tu.GDP complex and induces the exchange of GDP to GTP. It remains bound to the aminoacyl-tRNA.EF-Tu.GTP complex up to the GTP hydrolysis stage on the ribosome. The protein is Elongation factor Ts of Micrococcus luteus (strain ATCC 4698 / DSM 20030 / JCM 1464 / CCM 169 / CCUG 5858 / IAM 1056 / NBRC 3333 / NCIMB 9278 / NCTC 2665 / VKM Ac-2230) (Micrococcus lysodeikticus).